We begin with the raw amino-acid sequence, 213 residues long: Heterochromatin protein 1 (213 aa).

Disordered regions lie at residues 1–24 (MGKK…EEEY) and 74–151 (RKDE…TGFD). Residues 24 to 82 (YAVEKILDRRVRKGKVEYYLKWKGYAETENTWEPEGNLDCQDLIQQYELSRKDEANAAA) form the Chromo 1 domain. A compositionally biased stretch (basic and acidic residues) spans 89 to 104 (SKKERPGSSTKVKETG). The span at 105-115 (RTSTTASNSSG) shows a compositional bias: polar residues. In terms of domain architecture, Chromo 2 spans 154–212 (LEAEKILGASDNNGRLTFLIQFKGVDQAEMVPSTVANVKIPQMVIRFYEERLSWYSDNE).

The protein resides in the nucleus. In terms of biological role, structural component of heterochromatin, involved in gene repression and the modification of position-effect-variegation. Recognizes and binds histone H3 tails methylated at 'Lys-9', leading to epigenetic repression. The chain is Heterochromatin protein 1 (HP1A) from Drosophila virilis (Fruit fly).